Here is a 383-residue protein sequence, read N- to C-terminus: Carbamoyl phosphate synthase small chain (383 aa).

Residues 1–190 (MPHPSSRQAH…FDQRLKQHPD (190 aa)) form a CPSase region. L-glutamine contacts are provided by serine 51, glycine 242, and glycine 244. One can recognise a Glutamine amidotransferase type-1 domain in the interval 194-381 (RVVAIDFGIK…VALMADRRDV (188 aa)). The active-site Nucleophile is cysteine 271. Positions 272, 275, 311, 313, and 314 each coordinate L-glutamine. Active-site residues include histidine 354 and glutamate 356.

The protein belongs to the CarA family. As to quaternary structure, composed of two chains; the small (or glutamine) chain promotes the hydrolysis of glutamine to ammonia, which is used by the large (or ammonia) chain to synthesize carbamoyl phosphate. Tetramer of heterodimers (alpha,beta)4.

It carries out the reaction hydrogencarbonate + L-glutamine + 2 ATP + H2O = carbamoyl phosphate + L-glutamate + 2 ADP + phosphate + 2 H(+). It catalyses the reaction L-glutamine + H2O = L-glutamate + NH4(+). The protein operates within amino-acid biosynthesis; L-arginine biosynthesis; carbamoyl phosphate from bicarbonate: step 1/1. It functions in the pathway pyrimidine metabolism; UMP biosynthesis via de novo pathway; (S)-dihydroorotate from bicarbonate: step 1/3. Functionally, small subunit of the glutamine-dependent carbamoyl phosphate synthetase (CPSase). CPSase catalyzes the formation of carbamoyl phosphate from the ammonia moiety of glutamine, carbonate, and phosphate donated by ATP, constituting the first step of 2 biosynthetic pathways, one leading to arginine and/or urea and the other to pyrimidine nucleotides. The small subunit (glutamine amidotransferase) binds and cleaves glutamine to supply the large subunit with the substrate ammonia. This chain is Carbamoyl phosphate synthase small chain, found in Parasynechococcus marenigrum (strain WH8102).